The following is a 76-amino-acid chain: Conotoxin Im6.9 (76 aa).

The N-terminal stretch at 1-19 (MEKLTILLLVTAVLMSTQA) is a signal peptide. Residues 20–45 (LMQSGIEKRQRAKIKFFSKRKTTAER) constitute a propeptide that is removed on maturation. Cystine bridges form between Cys-51-Cys-65, Cys-58-Cys-69, and Cys-64-Cys-73.

This sequence belongs to the conotoxin O2 superfamily. In terms of tissue distribution, expressed by the venom duct.

The protein localises to the secreted. Its function is as follows. Probable neurotoxin. This chain is Conotoxin Im6.9, found in Conus imperialis (Imperial cone).